The primary structure comprises 198 residues: Probable GTP-binding protein EngB (198 aa).

Positions 22-195 constitute an EngB-type G domain; the sequence is NRVEVAFVGR…IDNLFLEFAT (174 aa). GTP-binding positions include 30-37, 57-61, 75-78, 142-145, and 174-176; these read GRSNVGKS, GKTRL, DLPG, TKSD, and FSS. Mg(2+) is bound by residues serine 37 and threonine 59.

The protein belongs to the TRAFAC class TrmE-Era-EngA-EngB-Septin-like GTPase superfamily. EngB GTPase family. The cofactor is Mg(2+).

Functionally, necessary for normal cell division and for the maintenance of normal septation. This is Probable GTP-binding protein EngB from Clostridium beijerinckii (strain ATCC 51743 / NCIMB 8052) (Clostridium acetobutylicum).